We begin with the raw amino-acid sequence, 146 residues long: Putative transposon Ty5-1 protein YCL075W (146 aa).

The polypeptide is Putative transposon Ty5-1 protein YCL075W (TY5B) (Saccharomyces cerevisiae (strain ATCC 204508 / S288c) (Baker's yeast)).